Here is a 208-residue protein sequence, read N- to C-terminus: Uracil phosphoribosyltransferase (208 aa).

Residues Arg-78, Arg-103, and Asp-130–Thr-138 each bind 5-phospho-alpha-D-ribose 1-diphosphate. Residues Ile-193 and Gly-198–Ala-200 contribute to the uracil site. Asp-199 provides a ligand contact to 5-phospho-alpha-D-ribose 1-diphosphate.

This sequence belongs to the UPRTase family. Mg(2+) is required as a cofactor.

It carries out the reaction UMP + diphosphate = 5-phospho-alpha-D-ribose 1-diphosphate + uracil. It functions in the pathway pyrimidine metabolism; UMP biosynthesis via salvage pathway; UMP from uracil: step 1/1. Its activity is regulated as follows. Allosterically activated by GTP. In terms of biological role, catalyzes the conversion of uracil and 5-phospho-alpha-D-ribose 1-diphosphate (PRPP) to UMP and diphosphate. The sequence is that of Uracil phosphoribosyltransferase from Campylobacter concisus (strain 13826).